Reading from the N-terminus, the 362-residue chain is Chalcone synthase A (362 aa).

Residue cysteine 168 is part of the active site.

This sequence belongs to the thiolase-like superfamily. Chalcone/stilbene synthases family.

It carries out the reaction (E)-4-coumaroyl-CoA + 3 malonyl-CoA + 3 H(+) = 2',4,4',6'-tetrahydroxychalcone + 3 CO2 + 4 CoA. It functions in the pathway secondary metabolite biosynthesis; flavonoid biosynthesis. In terms of biological role, the primary product of this enzyme is 4,2',4',6'-tetrahydroxychalcone (also termed naringenin-chalcone or chalcone) which can under specific conditions spontaneously isomerize into naringenin. The protein is Chalcone synthase A (CHSA) of Ipomoea trifida (Morning glory).